Here is a 354-residue protein sequence, read N- to C-terminus: Elongation factor Ts, mitochondrial (354 aa).

The N-terminal 47 residues, 1–47 (MMRSTLSLLQKCRLPNNNGSLLSFKNNQVVNQTALFSMKSNQQYRFY), are a transit peptide targeting the mitochondrion.

The protein belongs to the EF-Ts family.

It localises to the mitochondrion. Its function is as follows. Associates with the EF-Tu.GDP complex and induces the exchange of GDP to GTP. It remains bound to the aminoacyl-tRNA.EF-Tu.GTP complex up to the GTP hydrolysis stage on the ribosome. This is Elongation factor Ts, mitochondrial (tsfm) from Heterostelium pallidum (strain ATCC 26659 / Pp 5 / PN500) (Cellular slime mold).